Here is a 192-residue protein sequence, read N- to C-terminus: Signal peptidase complex subunit 2 (192 aa).

Residues 1-46 lie on the Cytoplasmic side of the membrane; it reads MEEKKTESTNKNVKKANLLDHHSIKHILDESVSDIVTSRGYKEDVR. A helical membrane pass occupies residues 47 to 69; it reads LSNLKLILGTIIIVVALVAQFYN. The Lumenal segment spans residues 70 to 78; it reads KKFPENRDF. Residues 79 to 98 form a helical membrane-spanning segment; sequence LIGCIALYVVLNAVLQLILY. Residues 99 to 192 are Cytoplasmic-facing; sequence TKEKNAILFT…YAEEEPKKKK (94 aa).

It belongs to the SPCS2 family. Component of the signal peptidase complex (SPC) composed of a catalytic subunit SEC11 and three accessory subunits SPCS1, SPCS2 and SPCS3. The complex induces a local thinning of the ER membrane which is used to measure the length of the signal peptide (SP) h-region of protein substrates. This ensures the selectivity of the complex towards h-regions shorter than 18-20 amino acids.

Its subcellular location is the endoplasmic reticulum membrane. Its function is as follows. Component of the signal peptidase complex (SPC) which catalyzes the cleavage of N-terminal signal sequences from nascent proteins as they are translocated into the lumen of the endoplasmic reticulum. Enhances the enzymatic activity of SPC and facilitates the interactions between different components of the translocation site. The polypeptide is Signal peptidase complex subunit 2 (Arabidopsis thaliana (Mouse-ear cress)).